Reading from the N-terminus, the 251-residue chain is RNA polymerase sigma factor SigI (251 aa).

Positions 61-74 (DEFSIGLIAFNEAI) match the Polymerase core binding motif. A DNA-binding region (H-T-H motif) is located at residues 206–225 (VKQLEQLVSVSRKTIERNRK).

This sequence belongs to the sigma-70 factor family. SigI subfamily. Interacts with RsgI.

The protein localises to the cytoplasm. Its activity is regulated as follows. Negatively regulated by the anti-sigma-I factor RsgI. Upon exposure to heat, SigI is released from RsgI and activated. Transient heat activation of SigI may depend upon DnaK chaperone. Sigma factors are initiation factors that promote the attachment of RNA polymerase to specific initiation sites and are then released. This sigma factor is involved in regulation of cell wall metabolism in response to heat stress. Acts by regulating the expression of genes such as bcrC, mreBH and lytE. Also plays a role in survival at low temperatures. The protein is RNA polymerase sigma factor SigI of Bacillus subtilis (strain 168).